The following is a 153-amino-acid chain: 3-hydroxyacyl-[acyl-carrier-protein] dehydratase FabZ (153 aa).

H54 is an active-site residue.

Belongs to the thioester dehydratase family. FabZ subfamily.

Its subcellular location is the cytoplasm. It carries out the reaction a (3R)-hydroxyacyl-[ACP] = a (2E)-enoyl-[ACP] + H2O. Its function is as follows. Involved in unsaturated fatty acids biosynthesis. Catalyzes the dehydration of short chain beta-hydroxyacyl-ACPs and long chain saturated and unsaturated beta-hydroxyacyl-ACPs. This Shewanella amazonensis (strain ATCC BAA-1098 / SB2B) protein is 3-hydroxyacyl-[acyl-carrier-protein] dehydratase FabZ.